The chain runs to 252 residues: 5'-nucleotidase SurE (252 aa).

A divalent metal cation-binding residues include aspartate 8, aspartate 9, serine 39, and asparagine 91.

It belongs to the SurE nucleotidase family. Requires a divalent metal cation as cofactor.

It is found in the cytoplasm. The catalysed reaction is a ribonucleoside 5'-phosphate + H2O = a ribonucleoside + phosphate. In terms of biological role, nucleotidase that shows phosphatase activity on nucleoside 5'-monophosphates. This is 5'-nucleotidase SurE from Legionella pneumophila (strain Lens).